Consider the following 227-residue polypeptide: Probable septum site-determining protein MinC (227 aa).

It belongs to the MinC family. In terms of assembly, interacts with MinD and FtsZ.

Its function is as follows. Cell division inhibitor that blocks the formation of polar Z ring septums. Rapidly oscillates between the poles of the cell to destabilize FtsZ filaments that have formed before they mature into polar Z rings. Prevents FtsZ polymerization. This chain is Probable septum site-determining protein MinC, found in Clostridioides difficile (strain 630) (Peptoclostridium difficile).